The following is a 214-amino-acid chain: Pyridoxine/pyridoxamine 5'-phosphate oxidase (214 aa).

Substrate-binding positions include 9-12 and Lys67; that span reads RKNY. FMN is bound by residues 62-67, 77-78, Lys83, Lys84, and Gln106; these read RIVLLK and YT. Substrate contacts are provided by Tyr124, Arg128, and Ser132. Residues 141 to 142 and Trp186 each bind FMN; that span reads QS. 192-194 contributes to the substrate binding site; it reads RLH. Arg196 is a binding site for FMN.

This sequence belongs to the pyridoxamine 5'-phosphate oxidase family. Homodimer. FMN is required as a cofactor.

It catalyses the reaction pyridoxamine 5'-phosphate + O2 + H2O = pyridoxal 5'-phosphate + H2O2 + NH4(+). The catalysed reaction is pyridoxine 5'-phosphate + O2 = pyridoxal 5'-phosphate + H2O2. The protein operates within cofactor metabolism; pyridoxal 5'-phosphate salvage; pyridoxal 5'-phosphate from pyridoxamine 5'-phosphate: step 1/1. Its pathway is cofactor metabolism; pyridoxal 5'-phosphate salvage; pyridoxal 5'-phosphate from pyridoxine 5'-phosphate: step 1/1. Functionally, catalyzes the oxidation of either pyridoxine 5'-phosphate (PNP) or pyridoxamine 5'-phosphate (PMP) into pyridoxal 5'-phosphate (PLP). The polypeptide is Pyridoxine/pyridoxamine 5'-phosphate oxidase (Leptospira borgpetersenii serovar Hardjo-bovis (strain JB197)).